The chain runs to 473 residues: Cysteine--tRNA ligase (473 aa).

Zn(2+) is bound at residue Cys28. The 'HIGH' region motif lies at 30–40 (MTVYDYCHLGH). The Zn(2+) site is built by Cys209, His234, and Glu238. Positions 282 to 286 (KMSKS) match the 'KMSKS' region motif. Lys285 is an ATP binding site.

This sequence belongs to the class-I aminoacyl-tRNA synthetase family. In terms of assembly, monomer. It depends on Zn(2+) as a cofactor.

It is found in the cytoplasm. The enzyme catalyses tRNA(Cys) + L-cysteine + ATP = L-cysteinyl-tRNA(Cys) + AMP + diphosphate. This Neisseria meningitidis serogroup B (strain ATCC BAA-335 / MC58) protein is Cysteine--tRNA ligase.